A 1227-amino-acid chain; its full sequence is Multifunctional 2-oxoglutarate metabolism enzyme (1227 aa).

The tract at residues 1-41 (MSSSPSPFGQNEWLVEEMYRKFRDDPSSVDPSWHEFLVDYS) is 2-oxoglutarate dehydrogenase E1, N-terminal part. Positions 23–37 (RDDPSSVDPSWHEFL) are enriched in basic and acidic residues. Positions 23-102 (RDDPSSVDPS…SATPAKGDES (80 aa)) are disordered. Positions 42–88 (PEPTTDSASNGRTTTAAPVTPPTPAPAPAPEPKAAPKPAAKTEAKPA) are linker. Over residues 43 to 53 (EPTTDSASNGR) the composition is skewed to polar residues. Over residues 60–76 (VTPPTPAPAPAPEPKAA) the composition is skewed to pro residues. A compositionally biased stretch (low complexity) spans 88–97 (AKPAKSATPA). Residues 89-335 (KPAKSATPAK…LRTIHQLLLD (247 aa)) are succinyltransferase E2. The active-site Proton acceptor; for succinyltransferase activity is His314. The tract at residues 336 to 1227 (DDFFDEIFRE…QQEILDTAFG (892 aa)) is 2-oxoglutarate dehydrogenase E1, C-terminal part. A thiamine diphosphate-binding site is contributed by Arg540. 2-oxoglutarate is bound by residues His579 and Ser604. 6 residues coordinate thiamine diphosphate: Ser604, Leu606, Asp645, Ala646, Ala647, and Asn678. Position 645 (Asp645) interacts with Mg(2+). Mg(2+)-binding residues include Asn678 and Ile680. A coiled-coil region spans residues 783 to 814 (DISMKEAEDALRDYQGQLERVFNEVRELEKHE). His1020 serves as a coordination point for 2-oxoglutarate. 7 residues coordinate acetyl-CoA: Thr1038, Arg1054, Lys1089, Ser1092, Gln1142, Arg1149, and Arg1150.

This sequence belongs to the 2-oxoacid dehydrogenase family. Kgd subfamily. Homodimer. Interacts with the FHA domain of unphosphorylated GarA. The 2-oxoglutarate dehydrogenase (ODH) complex contains multiple copies of three enzymatic components: 2-oxoglutarate dehydrogenase (E1), dihydrolipoamide succinyltransferase (E2) and lipoamide dehydrogenase (E3). Mg(2+) is required as a cofactor. Thiamine diphosphate serves as cofactor.

The enzyme catalyses glyoxylate + 2-oxoglutarate + H(+) = 2-hydroxy-3-oxoadipate + CO2. It catalyses the reaction 2-oxoglutarate + H(+) = succinate semialdehyde + CO2. The catalysed reaction is N(6)-[(R)-lipoyl]-L-lysyl-[protein] + 2-oxoglutarate + H(+) = N(6)-[(R)-S(8)-succinyldihydrolipoyl]-L-lysyl-[protein] + CO2. It carries out the reaction N(6)-[(R)-dihydrolipoyl]-L-lysyl-[protein] + succinyl-CoA = N(6)-[(R)-S(8)-succinyldihydrolipoyl]-L-lysyl-[protein] + CoA. Its pathway is carbohydrate metabolism; tricarboxylic acid cycle; succinate from 2-oxoglutarate (transferase route): step 1/2. It functions in the pathway carbohydrate metabolism; tricarboxylic acid cycle; succinyl-CoA from 2-oxoglutarate (dehydrogenase route): step 1/1. Alpha-ketoglutarate dehydrogenase and decarboxylase activities are inhibited by unphosphorylated GarA, and allosterically activated by acetyl-CoA, the main substrate of the TCA cycle. Both the phosphoadenosine and acetyl moieties of acetyl-CoA are important for activation because neither CoA nor the synthetic compound S-(2-acetamidoethyl)-ethanethioate (which mimics the terminal acetyl-phosphopantetheine group of acetyl-CoA) has an activation effect. Its function is as follows. Shows three enzymatic activities that share a first common step, the attack of thiamine-PP on 2-oxoglutarate (alpha-ketoglutarate, KG), leading to the formation of an enamine-thiamine-PP intermediate upon decarboxylation. Thus, displays KGD activity, catalyzing the decarboxylation from five-carbon 2-oxoglutarate to four-carbon succinate semialdehyde (SSA). Also catalyzes C-C bond formation between the activated aldehyde formed after decarboxylation of alpha-ketoglutarate and the carbonyl of glyoxylate (GLX), to yield 2-hydroxy-3-oxoadipate (HOA), which spontaneously decarboxylates to form 5-hydroxylevulinate (HLA). And is also a component of the 2-oxoglutarate dehydrogenase (ODH) complex, that catalyzes the overall conversion of 2-oxoglutarate to succinyl-CoA and CO(2). The KG decarboxylase and KG dehydrogenase reactions provide two alternative, tightly regulated, pathways connecting the oxidative and reductive branches of the TCA cycle. In Mycolicibacterium smegmatis (strain ATCC 700084 / mc(2)155) (Mycobacterium smegmatis), this protein is Multifunctional 2-oxoglutarate metabolism enzyme (kgd).